A 624-amino-acid polypeptide reads, in one-letter code: Multicopper oxidase elcG (624 aa).

A signal peptide spans 1–18 (MACNILNFLTGLLSLSST). 2 Plastocyanin-like domains span residues 48–160 (PGRA…IERG) and 216–373 (CMDA…TIRI). Asn65 carries an N-linked (GlcNAc...) asparagine glycan. Cu cation-binding residues include His96, His98, His140, and His142. N-linked (GlcNAc...) asparagine glycosylation is found at Asn271, Asn296, and Asn464. Positions 474–603 (FLFQDPSQIE…GGMGVVILDG (130 aa)) constitute a Plastocyanin-like 3 domain. Cu cation-binding residues include His511, His514, His516, His585, Cys586, His587, and His591.

It belongs to the multicopper oxidase family.

The protein operates within secondary metabolite biosynthesis. Functionally, multicopper oxidase; part of the gene cluster that mediates the biosynthesis of elsinochrome C, a perelyenequinone phytotoxin structurally similar to cercosporin. The first step of elsinochrome C biosynthesis is performed by the polyketide synthase elcA which catalyzes the formation of nor-toralactone. The starter unit acyltransferase (SAT) domain of elcA initiates polyketide extension by the selective utilization of acetyl-CoA, which is elongated to the heptaketide in the beta-ketoacyl synthase (KS) domain by successive condensations with six malonyl units introduced by the malonyl acyltransferase (MAT) domain. The product template (PT) domain catalyzes C4-C9 and C2-C11 aldol cyclizations and dehydrations to a trihydroxynaphthalene, which is thought to be delivered to the thioesterase (TE) domain for product release. The bifunctional enzyme elcB then methylates nor-toralactone to toralactone before conducting an unusual oxidative aromatic ring opening. The next step in perylenequinone biosynthesis is an O-methylation at the nascent OH-6 of the elcB product performed by the O-methyltransferase elcD. The oxidative coupling of the two monomeric naphthol units in perylenequinone biosynthesis is catalyzed by the FAD-dependent monooxygenase elcE and the multicopper oxidase elcG. ElcG might catalyze the first intermolecular coupling in a regio- and stereo-selective manner via a phenol radical coupling mechanism and the elcE could forge the second C-C bond intramolecularly via a hydride transfer mechanism. The fasciclin domain-containing protein elcF might also play a role duting this step. The last piece of the puzzle in the biosynthesis of elsinochrome C is the additional annulation by enolate coupling to afford the dihydrobenzo(ghi)perylenequinone system, catalyzed by the FAD-dependent monooxygenase elcH. The polypeptide is Multicopper oxidase elcG (Phaeosphaeria nodorum (strain SN15 / ATCC MYA-4574 / FGSC 10173) (Glume blotch fungus)).